We begin with the raw amino-acid sequence, 68 residues long: UPF0253 protein AHA_2115 (68 aa).

This sequence belongs to the UPF0253 family.

The protein is UPF0253 protein AHA_2115 of Aeromonas hydrophila subsp. hydrophila (strain ATCC 7966 / DSM 30187 / BCRC 13018 / CCUG 14551 / JCM 1027 / KCTC 2358 / NCIMB 9240 / NCTC 8049).